A 39-amino-acid polypeptide reads, in one-letter code: Potassium channel toxin alpha-KTx 2.24 (39 aa).

Disulfide bonds link Cys7-Cys29, Cys13-Cys34, and Cys17-Cys36.

The protein belongs to the short scorpion toxin superfamily. Potassium channel inhibitor family. Alpha-KTx 02 subfamily. In terms of tissue distribution, expressed by the venom gland.

The protein resides in the secreted. Blocks human voltage-gated potassium (Kv) channels Kv1.1/KCNA, Kv1.2/KCNA2 and Kv1.3/KCNA3. Exhibits high affinity for Kv1.2/KCNA2 and selectivity over Kv1.1/KCNA and Kv1.3/KCNA3. The protein is Potassium channel toxin alpha-KTx 2.24 of Centruroides bonito (Scorpion).